A 525-amino-acid chain; its full sequence is GMP synthase [glutamine-hydrolyzing] (525 aa).

Residues 13–202 (TILVLDFGSQ…AVDLCHAKQN (190 aa)) enclose the Glutamine amidotransferase type-1 domain. Cys-89 serves as the catalytic Nucleophile. Active-site residues include His-176 and Glu-178. Residues 203–400 (WTMENFIDTE…LGIPHDLVWR (198 aa)) enclose the GMPS ATP-PPase domain. Position 231–237 (231–237 (SGGVDST)) interacts with ATP. Lys-241 is covalently cross-linked (Glycyl lysine isopeptide (Lys-Gly) (interchain with G-Cter in ubiquitin)). Position 304 (Arg-304) interacts with XMP. Lys-426 participates in a covalent cross-link: Glycyl lysine isopeptide (Lys-Gly) (interchain with G-Cter in ubiquitin). 3 residues coordinate XMP: Asp-462, Lys-517, and Glu-523.

As to quaternary structure, homodimer. Mg(2+) is required as a cofactor.

The protein resides in the cytoplasm. Its subcellular location is the cytosol. The catalysed reaction is XMP + L-glutamine + ATP + H2O = GMP + L-glutamate + AMP + diphosphate + 2 H(+). It functions in the pathway purine metabolism; GMP biosynthesis; GMP from XMP (L-Gln route): step 1/1. Its function is as follows. Catalyzes the conversion of xanthine monophosphate (XMP) to GMP in the presence of glutamine and ATP through an adenyl-XMP intermediate. In Saccharomyces cerevisiae (strain ATCC 204508 / S288c) (Baker's yeast), this protein is GMP synthase [glutamine-hydrolyzing].